The following is a 478-amino-acid chain: Ninja-family protein 8 (478 aa).

3 disordered regions span residues 1-247, 337-374, and 454-478; these read MDDD…LTPG, FTAKDKADQTGTKQVDDGKKPQEAGASSSAHAEDEKKA, and DAPAQDNSATLPAFPAGNQATSAEN. Positions 23 to 35 are enriched in basic and acidic residues; the sequence is KARDAPLEPKAEP. Residues 169 to 179 show a composition bias toward polar residues; that stretch reads ISISTDDGSTG. Residues 180–189 are compositionally biased toward acidic residues; sequence ENEDVAESEA. A compositionally biased stretch (low complexity) spans 233–242; it reads SFSGSESSSG. Residues 339-358 are compositionally biased toward basic and acidic residues; it reads AKDKADQTGTKQVDDGKKPQ.

Belongs to the Ninja family.

The protein resides in the nucleus. The sequence is that of Ninja-family protein 8 from Zea mays (Maize).